The following is a 67-amino-acid chain: Large ribosomal subunit protein bL35 (67 aa).

The protein belongs to the bacterial ribosomal protein bL35 family.

The sequence is that of Large ribosomal subunit protein bL35 from Sphingopyxis alaskensis (strain DSM 13593 / LMG 18877 / RB2256) (Sphingomonas alaskensis).